Consider the following 356-residue polypeptide: Probable farnesyl diphosphate synthase DDB_G0278823 (356 aa).

Lysine 55, arginine 58, and glutamine 94 together coordinate isopentenyl diphosphate. Residues aspartate 101 and aspartate 105 each contribute to the Mg(2+) site. Dimethylallyl diphosphate is bound at residue arginine 110. Arginine 111 is an isopentenyl diphosphate binding site. Lysine 203, threonine 204, glutamine 243, lysine 260, and lysine 269 together coordinate dimethylallyl diphosphate.

The protein belongs to the FPP/GGPP synthase family. Requires Mg(2+) as cofactor.

The protein resides in the cytoplasm. It catalyses the reaction isopentenyl diphosphate + dimethylallyl diphosphate = (2E)-geranyl diphosphate + diphosphate. The enzyme catalyses isopentenyl diphosphate + (2E)-geranyl diphosphate = (2E,6E)-farnesyl diphosphate + diphosphate. It functions in the pathway isoprenoid biosynthesis; farnesyl diphosphate biosynthesis; farnesyl diphosphate from geranyl diphosphate and isopentenyl diphosphate: step 1/1. It participates in isoprenoid biosynthesis; geranyl diphosphate biosynthesis; geranyl diphosphate from dimethylallyl diphosphate and isopentenyl diphosphate: step 1/1. Inhibited by aminobisphosphonate drugs (aBP), such as risedronate and alendronate. Key enzyme in isoprenoid biosynthesis which catalyzes the formation of farnesyl diphosphate (FPP), a sterol precursor. This is Probable farnesyl diphosphate synthase DDB_G0278823 from Dictyostelium discoideum (Social amoeba).